The primary structure comprises 297 residues: F-box only protein 2 (297 aa).

Residues 1–47 form a disordered region; the sequence is MDGDGDPESVSHPEEASPEEQPEEAGAEASAEEEQLREAEEEEEAEA. The segment covering 16–47 has biased composition (acidic residues); the sequence is ASPEEQPEEAGAEASAEEEQLREAEEEEEAEA. The F-box domain maps to 48–95; it reads VEYLAELPEPLLLRVLAELPATELVQACRLVCLRWKELVDGAPLWLLK. The residue at position 106 (serine 106) is a Phosphoserine. Residues 117-297 form the FBA domain; the sequence is FYFLSKRRRN…VTNSSVWVEP (181 aa). Residues 214–216 and 279–280 each bind a carbohydrate; these read RTD and YW.

As to quaternary structure, component of the SCF(FBXO2) complex consisting of CUL1, RBX1, SKP1 and FBXO2. Predominantly detected as heterodimer with SKP1; the heterodimer with SKP1 is not part of the SCF(FBXO2) complex. As to expression, detected in brain and cochlea, in epithelial support cells and hair cells of the organ of Corti (at protein level).

It is found in the cytoplasm. The protein localises to the microsome membrane. It participates in protein modification; protein ubiquitination. In terms of biological role, substrate recognition component of a SCF (SKP1-CUL1-F-box protein) E3 ubiquitin-protein ligase complex that mediates the ubiquitination and subsequent proteasomal degradation of target proteins. Involved in the endoplasmic reticulum-associated degradation pathway (ERAD) for misfolded lumenal proteins by recognizing and binding sugar chains on unfolded glycoproteins that are retrotranslocated into the cytosol and promoting their ubiquitination and subsequent degradation. Prevents formation of cytosolic aggregates of unfolded glycoproteins that have been retrotranslocated into the cytosol. Able to recognize and bind denatured glycoproteins, preferentially those of the high-mannose type. In Mus musculus (Mouse), this protein is F-box only protein 2 (Fbxo2).